Consider the following 418-residue polypeptide: Glutamyl-tRNA reductase (418 aa).

Residues 49 to 52 (TCNR), serine 107, 112 to 114 (EPQ), and glutamine 118 contribute to the substrate site. Cysteine 50 (nucleophile) is an active-site residue. Residue 187–192 (GAGETI) participates in NADP(+) binding.

Belongs to the glutamyl-tRNA reductase family. Homodimer.

The enzyme catalyses (S)-4-amino-5-oxopentanoate + tRNA(Glu) + NADP(+) = L-glutamyl-tRNA(Glu) + NADPH + H(+). The protein operates within porphyrin-containing compound metabolism; protoporphyrin-IX biosynthesis; 5-aminolevulinate from L-glutamyl-tRNA(Glu): step 1/2. In terms of biological role, catalyzes the NADPH-dependent reduction of glutamyl-tRNA(Glu) to glutamate 1-semialdehyde (GSA). In Pseudoalteromonas translucida (strain TAC 125), this protein is Glutamyl-tRNA reductase.